The primary structure comprises 344 residues: Coproporphyrin III ferrochelatase (344 aa).

Serine 52 is a Fe-coproporphyrin III binding site. Cysteine 113 contributes to the [2Fe-2S] cluster binding site. Tyrosine 116 serves as a coordination point for Fe-coproporphyrin III. Fe(2+) contacts are provided by histidine 172 and glutamate 255. [2Fe-2S] cluster-binding residues include cysteine 316, cysteine 325, and cysteine 330.

This sequence belongs to the ferrochelatase family. The cofactor is [2Fe-2S] cluster.

The protein resides in the cytoplasm. It carries out the reaction Fe-coproporphyrin III + 2 H(+) = coproporphyrin III + Fe(2+). The protein operates within porphyrin-containing compound metabolism; protoheme biosynthesis. Functionally, involved in coproporphyrin-dependent heme b biosynthesis. Catalyzes the insertion of ferrous iron into coproporphyrin III to form Fe-coproporphyrin III. The sequence is that of Coproporphyrin III ferrochelatase from Mycobacterium bovis (strain ATCC BAA-935 / AF2122/97).